Reading from the N-terminus, the 394-residue chain is Elongation factor Tu (394 aa).

One can recognise a tr-type G domain in the interval 10–204; that stretch reads KPHVNVGTIG…ALDSYIPTPE (195 aa). The tract at residues 19 to 26 is G1; sequence GHVDHGKT. 19–26 contributes to the GTP binding site; sequence GHVDHGKT. Thr26 provides a ligand contact to Mg(2+). The interval 60 to 64 is G2; that stretch reads GITIN. Positions 81-84 are G3; the sequence is DCPG. GTP-binding positions include 81-85 and 136-139; these read DCPGH and NKCD. The tract at residues 136–139 is G4; that stretch reads NKCD. The tract at residues 174-176 is G5; that stretch reads SAL.

The protein belongs to the TRAFAC class translation factor GTPase superfamily. Classic translation factor GTPase family. EF-Tu/EF-1A subfamily. As to quaternary structure, monomer.

The protein resides in the cytoplasm. The enzyme catalyses GTP + H2O = GDP + phosphate + H(+). GTP hydrolase that promotes the GTP-dependent binding of aminoacyl-tRNA to the A-site of ribosomes during protein biosynthesis. This Neisseria meningitidis serogroup A / serotype 4A (strain DSM 15465 / Z2491) protein is Elongation factor Tu.